The following is a 3036-amino-acid chain: DmX-like protein 2 (3036 aa).

3 WD repeats span residues 108-145, 167-207, and 230-278; these read FLSS…ILEE, KTSV…KSSI, and AHPR…EDCL. Position 326 is a phosphoserine (S326). A disordered region spans residues 417-480; it reads KQVDHENDDA…EGSPRTYSRL (64 aa). Residues 422-434 are compositionally biased toward acidic residues; it reads ENDDADREDEEHS. Over residues 435-473 the composition is skewed to basic and acidic residues; that stretch reads QEDRERGLHMKLDHDLSLDRESEAGTGSSEHEDGEREGS. Phosphoserine is present on S473. The stretch at 492-532 is one WD 4 repeat; the sequence is DRKIETLLTEWNKNPDMLFTIHPVDGTFLVWHVKYLDEYNP. S588 bears the Phosphoserine mark. WD repeat units lie at residues 595–634, 751–803, and 878–920; these read HSRS…KSAF, LHTS…RKLL, and QPSQ…VQAC. A disordered region spans residues 932–959; the sequence is SLLSVPGQKNVDSSPETSPSVSPMPHSS. Residues S944 and S945 each carry the phosphoserine modification. Over residues 949-959 the composition is skewed to low complexity; the sequence is SPSVSPMPHSS. Residues 1000–1037 form a WD 8 repeat; it reads LSSSSIYPVCLAPYLVVTTCSDNKVRFWKCCMEANPEC. Phosphoserine occurs at positions 1140, 1143, and 1151. 2 WD repeats span residues 1163 to 1204 and 1244 to 1281; these read PNIK…VTEQ and GTPS…VKFG. S1287 and S1400 each carry phosphoserine. T1417 bears the Phosphothreonine mark. S1857 is subject to Phosphoserine. The segment covering 1927–1936 has biased composition (basic and acidic residues); the sequence is ISHRMDDVPS. A disordered region spans residues 1927–1952; that stretch reads ISHRMDDVPSHSKALSDGNGSSGIEW. S1984 is modified (phosphoserine). Positions 1999 to 2033 are disordered; sequence KSTDAREKDKQSDQKASDPNMLLTPQEEDDPEGDT. Basic and acidic residues predominate over residues 2001 to 2014; it reads TDAREKDKQSDQKA. T2022 bears the Phosphothreonine mark. Residues 2024–2033 are compositionally biased toward acidic residues; that stretch reads QEEDDPEGDT. A coiled-coil region spans residues 2122 to 2153; the sequence is GSYERHQIERRRLQAKREHAERRKSWLQKNQD. Phosphoserine is present on residues S2399 and S2640. 6 WD repeats span residues 2761–2800, 2804–2843, 2850–2892, 2898–2937, 2940–2979, and 2992–3030; these read RNLH…QLVC, AGNA…SNPK, CHSK…GNSL, CHDH…LIHT, AHDS…LIHS, and NIGA…NIPN.

In terms of assembly, interacts with MADD and RAB3GAP.

The protein localises to the cytoplasmic vesicle. The protein resides in the secretory vesicle. Its subcellular location is the synaptic vesicle membrane. It is found in the neuronal dense core vesicle. Its function is as follows. May serve as a scaffold protein for MADD and RAB3GA on synaptic vesicles. Plays a role in the brain as a key controller of neuronal and endocrine homeostatic processes. The polypeptide is DmX-like protein 2 (DMXL2) (Homo sapiens (Human)).